The primary structure comprises 178 residues: NAD(P)H-quinone oxidoreductase subunit 6, chloroplastic (178 aa).

A run of 5 helical transmembrane segments spans residues 10-30, 33-53, 64-84, 100-120, and 148-168; these read LIVA…VIFF, IVYA…LYLF, ILIY…LISL, ISAF…LQTP, and LLPF…AVSI.

Belongs to the complex I subunit 6 family. NDH is composed of at least 16 different subunits, 5 of which are encoded in the nucleus.

The protein resides in the plastid. Its subcellular location is the chloroplast thylakoid membrane. It catalyses the reaction a plastoquinone + NADH + (n+1) H(+)(in) = a plastoquinol + NAD(+) + n H(+)(out). The enzyme catalyses a plastoquinone + NADPH + (n+1) H(+)(in) = a plastoquinol + NADP(+) + n H(+)(out). In terms of biological role, NDH shuttles electrons from NAD(P)H:plastoquinone, via FMN and iron-sulfur (Fe-S) centers, to quinones in the photosynthetic chain and possibly in a chloroplast respiratory chain. The immediate electron acceptor for the enzyme in this species is believed to be plastoquinone. Couples the redox reaction to proton translocation, and thus conserves the redox energy in a proton gradient. The sequence is that of NAD(P)H-quinone oxidoreductase subunit 6, chloroplastic (ndhG) from Chara vulgaris (Common stonewort).